A 494-amino-acid chain; its full sequence is Aspartyl/glutamyl-tRNA(Asn/Gln) amidotransferase subunit B (494 aa).

Belongs to the GatB/GatE family. GatB subfamily. Heterotrimer of A, B and C subunits.

It catalyses the reaction L-glutamyl-tRNA(Gln) + L-glutamine + ATP + H2O = L-glutaminyl-tRNA(Gln) + L-glutamate + ADP + phosphate + H(+). It carries out the reaction L-aspartyl-tRNA(Asn) + L-glutamine + ATP + H2O = L-asparaginyl-tRNA(Asn) + L-glutamate + ADP + phosphate + 2 H(+). In terms of biological role, allows the formation of correctly charged Asn-tRNA(Asn) or Gln-tRNA(Gln) through the transamidation of misacylated Asp-tRNA(Asn) or Glu-tRNA(Gln) in organisms which lack either or both of asparaginyl-tRNA or glutaminyl-tRNA synthetases. The reaction takes place in the presence of glutamine and ATP through an activated phospho-Asp-tRNA(Asn) or phospho-Glu-tRNA(Gln). This is Aspartyl/glutamyl-tRNA(Asn/Gln) amidotransferase subunit B from Synechococcus elongatus (strain ATCC 33912 / PCC 7942 / FACHB-805) (Anacystis nidulans R2).